The following is a 433-amino-acid chain: Pyroglutamylated RF-amide peptide receptor (433 aa).

Residues 1-46 (MQALNITAEQFSRLLSAHNLTREQFIHRYGLRPLVYTPELPARAKL) lie on the Extracellular side of the membrane. N-linked (GlcNAc...) asparagine glycans are attached at residues Asn-5 and Asn-19. A helical transmembrane segment spans residues 47 to 67 (AFALAGALIFALALFGNSLVI). Topologically, residues 68–81 (YVVTRSKAMRTVTN) are cytoplasmic. A helical membrane pass occupies residues 82 to 102 (IFICSLALSDLLIAFFCIPVT). At 103–120 (MLQNISDKWLGGAFICKM) the chain is on the extracellular side. A helical transmembrane segment spans residues 121–141 (VPFVQSTAVVTEILTMTCIAV). Over 142 to 162 (ERHQGLIHPFKMKWQYTTRRA) the chain is Cytoplasmic. Residues 163–183 (FTILGVVWLAAIIVGSPMWHV) traverse the membrane as a helical segment. At 184 to 212 (QRLEIKYDFLYEKEHVCCLEEWASPMHQR) the chain is on the extracellular side. The helical transmembrane segment at 213–233 (IYTTFILVILFLLPLVVMLVL) threads the bilayer. Topologically, residues 234 to 271 (YSKIGYELWIKKRVGDSSALQTIHGKEMSKIARKKKRA) are cytoplasmic. A helical membrane pass occupies residues 272-292 (VVMMVTVVALFAACWAPFHVV). Residues 293-313 (HMMVEYSNFEKEYDDVTIKMV) lie on the Extracellular side of the membrane. A helical transmembrane segment spans residues 314-334 (FAVAQTIGFFNSICNPFVYAF). Topologically, residues 335–433 (MNENFKKNFL…NSTFGSGHEL (99 aa)) are cytoplasmic.

This sequence belongs to the G-protein coupled receptor 1 family. Expressed widely in the brain with high levels in the cortex and hypothalamus, and moderate levels in the brain stem, caudate nucleus, midbrain hippocampus, thalamus, trigeminal ganglia and spinal cord. Particularly strong expression detected in the mitral cell layer of the olfactory bulb, accessory olfactory bulb, island of Calleja and nucleus of the solitary tract. In peripheral tissues, expressed at moderate levels in the eye, liver, kidney, pituitary gland, testis and thymus.

It is found in the cell membrane. Its function is as follows. Receptor for the orexigenic neuropeptide QRFP. The activity of this receptor is mediated by G proteins that modulate adenylate cyclase activity and intracellular calcium levels. The protein is Pyroglutamylated RF-amide peptide receptor (Qrfpr) of Mus musculus (Mouse).